Reading from the N-terminus, the 245-residue chain is 3-deoxy-manno-octulosonate cytidylyltransferase (245 aa).

This sequence belongs to the KdsB family.

It localises to the cytoplasm. The enzyme catalyses 3-deoxy-alpha-D-manno-oct-2-ulosonate + CTP = CMP-3-deoxy-beta-D-manno-octulosonate + diphosphate. Its pathway is nucleotide-sugar biosynthesis; CMP-3-deoxy-D-manno-octulosonate biosynthesis; CMP-3-deoxy-D-manno-octulosonate from 3-deoxy-D-manno-octulosonate and CTP: step 1/1. The protein operates within bacterial outer membrane biogenesis; lipopolysaccharide biosynthesis. Its function is as follows. Activates KDO (a required 8-carbon sugar) for incorporation into bacterial lipopolysaccharide in Gram-negative bacteria. This chain is 3-deoxy-manno-octulosonate cytidylyltransferase, found in Rhodopseudomonas palustris (strain HaA2).